The sequence spans 425 residues: NAC transcription factor ONAC010 (425 aa).

The span at 1-10 shows a compositional bias: polar residues; sequence MESPDSSSGS. The segment at 1–34 is disordered; the sequence is MESPDSSSGSAPPRVLRRQQQQPGSAPELPPGFR. The segment covering 12-23 has biased composition (low complexity); that stretch reads PPRVLRRQQQQP. In terms of domain architecture, NAC spans 29 to 200; sequence LPPGFRFHPT…DWVLCRIYKK (172 aa). Residues 129 to 206 mediate DNA binding; it reads VGVKKALVFY…IYKKTNKAGA (78 aa).

It localises to the nucleus. In terms of biological role, transcription factor of the NAC family associated with male fertility. The chain is NAC transcription factor ONAC010 (ONAC010) from Oryza sativa subsp. indica (Rice).